Reading from the N-terminus, the 640-residue chain is 1,4-alpha-glucan branching enzyme GlgB (640 aa).

D318 functions as the Nucleophile in the catalytic mechanism. E371 (proton donor) is an active-site residue.

The protein belongs to the glycosyl hydrolase 13 family. GlgB subfamily. As to quaternary structure, monomer.

The enzyme catalyses Transfers a segment of a (1-&gt;4)-alpha-D-glucan chain to a primary hydroxy group in a similar glucan chain.. It functions in the pathway glycan biosynthesis; glycogen biosynthesis. Functionally, catalyzes the formation of the alpha-1,6-glucosidic linkages in glycogen by scission of a 1,4-alpha-linked oligosaccharide from growing alpha-1,4-glucan chains and the subsequent attachment of the oligosaccharide to the alpha-1,6 position. The polypeptide is 1,4-alpha-glucan branching enzyme GlgB (Francisella philomiragia subsp. philomiragia (strain ATCC 25017 / CCUG 19701 / FSC 153 / O#319-036)).